The chain runs to 443 residues: MSYFGTDGIRGKFGEMPITPEFALKLGFAAGKVLKRTSPINKPIVVLGKDTRLSGYILESALQAGLNAAGVYVHLLGPLPTPAIAHLTRALHADAGIVISASHNPYFDNGIKFFSGEGKKLPDSLQDEINQELEHELHIEDTANLGKSVRLIDANGRYIEFCKSTFPYHFDLRNLTIVVDCANGAAYNVGPSVFRELGAKVIALYNDPNGMNINEHCGSTHPENLQKAVVHYKADLGIAFDGDADRVILVDKFGELVDGDHILYILATQAKKKPAGIVGTVMSNMALELALAKADVPFIRAKVGDRYVLQALEENDWVTGGEPSGHILTLDKSTTGDAIIAALQVLTVMVEQNKALHELVTGFELFPQVLVNVRLDQMMDPYSVPALVSEFEQAEAQLKGRGRLLIRKSGTEPVIRVMVEGDNQKEVTDLAHRLAESVRTHAA.

The active-site Phosphoserine intermediate is the S102. Residues S102, D241, D243, and D245 each coordinate Mg(2+). Residue S102 is modified to Phosphoserine.

It belongs to the phosphohexose mutase family. Requires Mg(2+) as cofactor. Post-translationally, activated by phosphorylation.

It carries out the reaction alpha-D-glucosamine 1-phosphate = D-glucosamine 6-phosphate. Functionally, catalyzes the conversion of glucosamine-6-phosphate to glucosamine-1-phosphate. The polypeptide is Phosphoglucosamine mutase (Acinetobacter baylyi (strain ATCC 33305 / BD413 / ADP1)).